We begin with the raw amino-acid sequence, 273 residues long: Formamidopyrimidine-DNA glycosylase (273 aa).

Pro-2 acts as the Schiff-base intermediate with DNA in catalysis. Glu-3 acts as the Proton donor in catalysis. Lys-59 (proton donor; for beta-elimination activity) is an active-site residue. 2 residues coordinate DNA: His-92 and Arg-111. The FPG-type zinc finger occupies 239–273; the sequence is KVYGKTDEPCVVCGKPIEKIKLNGRGTHFCPNCQK. Residue Arg-263 is the Proton donor; for delta-elimination activity of the active site.

This sequence belongs to the FPG family. Monomer. Requires Zn(2+) as cofactor.

It catalyses the reaction Hydrolysis of DNA containing ring-opened 7-methylguanine residues, releasing 2,6-diamino-4-hydroxy-5-(N-methyl)formamidopyrimidine.. The catalysed reaction is 2'-deoxyribonucleotide-(2'-deoxyribose 5'-phosphate)-2'-deoxyribonucleotide-DNA = a 3'-end 2'-deoxyribonucleotide-(2,3-dehydro-2,3-deoxyribose 5'-phosphate)-DNA + a 5'-end 5'-phospho-2'-deoxyribonucleoside-DNA + H(+). Its function is as follows. Involved in base excision repair of DNA damaged by oxidation or by mutagenic agents. Acts as a DNA glycosylase that recognizes and removes damaged bases. Has a preference for oxidized purines, such as 7,8-dihydro-8-oxoguanine (8-oxoG). Has AP (apurinic/apyrimidinic) lyase activity and introduces nicks in the DNA strand. Cleaves the DNA backbone by beta-delta elimination to generate a single-strand break at the site of the removed base with both 3'- and 5'-phosphates. The sequence is that of Formamidopyrimidine-DNA glycosylase from Listeria monocytogenes serotype 4b (strain F2365).